A 222-amino-acid chain; its full sequence is 26S proteasome non-ATPase regulatory subunit 9 (222 aa).

A PDZ domain is found at 108 to 194 (QARDMAEARE…KPLNVTVIRR (87 aa)). The residue at position 128 (S128) is a Phosphoserine.

It belongs to the proteasome subunit p27 family. In terms of assembly, interacts with PSMC3. Part of a transient complex (modulator) containing PSMD9, PSMC6 and PSMC3 formed during the assembly of the 26S proteasome.

Its function is as follows. Acts as a chaperone during the assembly of the 26S proteasome, specifically of the base subcomplex of the PA700/19S regulatory complex (RC). During the base subcomplex assembly is part of an intermediate PSMD9:PSMC6:PSMC3 module, also known as modulator trimer complex; PSMD9 is released during the further base assembly process. This Mus musculus (Mouse) protein is 26S proteasome non-ATPase regulatory subunit 9 (Psmd9).